Consider the following 238-residue polypeptide: uncharacterized protein (238 aa).

4 helical membrane passes run 13-33 (TLFFIYFVFLTSFCLCFFGII), 40-60 (GSVGQLIAKLVVIVVLTLILG), 107-127 (VVLILSLVLTYYLSIYAFCQV), and 140-160 (VISLIILIFFLSLSFFVPMAF). 4Fe-4S ferredoxin-type domains lie at 178 to 208 (PFFQLKTNNNCVKCKLCEFKCPMQIKITEKL) and 204 to 233 (ITEKLDQKECIRCFECKSSCKKDALSFSYA). Positions 188, 191, 194, 198, 213, 216, 219, and 223 each coordinate [4Fe-4S] cluster.

It is found in the cell membrane. This is an uncharacterized protein from Methanocaldococcus jannaschii (strain ATCC 43067 / DSM 2661 / JAL-1 / JCM 10045 / NBRC 100440) (Methanococcus jannaschii).